We begin with the raw amino-acid sequence, 385 residues long: Cellulase CelDZ1 (385 aa).

The chain crosses the membrane as a helical span at residues 6–26; sequence INKWYFFVGMLVIFAVIISLI. Substrate-binding positions include H87, 91–92, Y118, and H153; that span reads WF. The active-site Proton donor is E192. Position 261 (Y261) interacts with substrate. E294 (nucleophile) is an active-site residue. Residues 300–301, W328, and 333–335 each bind substrate; these read AS and KNE.

It belongs to the glycosyl hydrolase 5 (cellulase A) family. As to quaternary structure, monomer.

The protein localises to the cell membrane. It carries out the reaction Endohydrolysis of (1-&gt;4)-beta-D-glucosidic linkages in cellulose, lichenin and cereal beta-D-glucans.. Activity is enhanced by 1mM Mn(2+), but is not affected by 1mM Ca(2+), Mg(2+), Zn(2+), K(+), Na(+) or Li(+). Activity is not inhibited by EDTA (in vitro). Functionally, thermostable endoglucanase that has high activity with soluble polymeric substrates containing beta-1,4-glycosidic bonds, such as carboxymethyl cellulose (CMC) and barley beta-D-glucan (in vitro). Has no activity with cellobiose and filter paper. Has no activity with substrates containing beta-1,3-linked glycans, such as laminarin. Likewise, lacks activity with xylan, galactomannan and pectin. The chain is Cellulase CelDZ1 from Thermoanaerobacterium sp.